A 518-amino-acid chain; its full sequence is 2-isopropylmalate synthase (518 aa).

Residues 5–267 (VIIFDTTLRD…STNIKHKEIY (263 aa)) form the Pyruvate carboxyltransferase domain. Residues D14, H202, H204, and N238 each contribute to the Mn(2+) site. A regulatory domain region spans residues 392 to 518 (SLSFFSVQSI…KLKTLKKVNN (127 aa)).

The protein belongs to the alpha-IPM synthase/homocitrate synthase family. LeuA type 1 subfamily. As to quaternary structure, homodimer. Mn(2+) serves as cofactor.

The protein localises to the cytoplasm. The enzyme catalyses 3-methyl-2-oxobutanoate + acetyl-CoA + H2O = (2S)-2-isopropylmalate + CoA + H(+). The protein operates within amino-acid biosynthesis; L-leucine biosynthesis; L-leucine from 3-methyl-2-oxobutanoate: step 1/4. In terms of biological role, catalyzes the condensation of the acetyl group of acetyl-CoA with 3-methyl-2-oxobutanoate (2-ketoisovalerate) to form 3-carboxy-3-hydroxy-4-methylpentanoate (2-isopropylmalate). This chain is 2-isopropylmalate synthase, found in Buchnera aphidicola subsp. Schizaphis graminum (strain Sg).